Consider the following 417-residue polypeptide: MLKREMNIADYDAELWQAMEQEKVRQEEHIELIASENYTSPRVMQAQGSQLTNKYAEGYPGKRYYGGCEYVDVVEQLAIDRAKELFGADYANVQPHSGSQANFAVYTALLQPGDTVLGMNLAQGGHLTHGSPVNFSGKLYNIVPYGIDESGKIDYDEMAKLAKEHKPKMIIGGFSAYSGVVDWAKMREIADSIGAYLFVDMAHVAGLIAAGVYPNPVPHAHVVTTTTHKTLAGPRGGLILAKGGDEELYKKLNSAVFPSAQGGPLMHVIAGKAVALKEAMEPEFKVYQQQVAKNAKAMVEVFLNRGYKVVSGGTENHLFLLDLVDKNLTGKEADAALGRANITVNKNSVPNDPKSPFVTSGIRIGSPAVTRRGFKEAEVKELAGWMCDVLDNINDEATIERVKVKVLDICARFPVYA.

(6S)-5,6,7,8-tetrahydrofolate is bound by residues Leu-121 and 125-127; that span reads GHL. Lys-229 is modified (N6-(pyridoxal phosphate)lysine). Residue 355 to 357 coordinates (6S)-5,6,7,8-tetrahydrofolate; sequence SPF.

Belongs to the SHMT family. As to quaternary structure, homodimer. Requires pyridoxal 5'-phosphate as cofactor.

The protein resides in the cytoplasm. It carries out the reaction (6R)-5,10-methylene-5,6,7,8-tetrahydrofolate + glycine + H2O = (6S)-5,6,7,8-tetrahydrofolate + L-serine. Its pathway is one-carbon metabolism; tetrahydrofolate interconversion. The protein operates within amino-acid biosynthesis; glycine biosynthesis; glycine from L-serine: step 1/1. Its function is as follows. Catalyzes the reversible interconversion of serine and glycine with tetrahydrofolate (THF) serving as the one-carbon carrier. This reaction serves as the major source of one-carbon groups required for the biosynthesis of purines, thymidylate, methionine, and other important biomolecules. Also exhibits THF-independent aldolase activity toward beta-hydroxyamino acids, producing glycine and aldehydes, via a retro-aldol mechanism. This Salmonella paratyphi C (strain RKS4594) protein is Serine hydroxymethyltransferase.